The primary structure comprises 506 residues: MAP kinase kinase MKK2/SSP33 (506 aa).

The disordered stretch occupies residues 1–69 (MASMFRPPES…TSTTSSMASN (69 aa)). Positions 26 to 52 (LVQNAKSTNDGQHLNRSPYSSVNESPY) are enriched in polar residues. Positions 53-69 (SNNSTSATSTTSSMASN) are enriched in low complexity. Residues 214–481 (ITTLGILGEG…PRQMLKHPWI (268 aa)) form the Protein kinase domain. ATP is bound by residues 220 to 228 (LGEGAGGSV) and Lys243. The active-site Proton acceptor is the Asp342.

It belongs to the protein kinase superfamily. STE Ser/Thr protein kinase family. MAP kinase kinase subfamily.

It catalyses the reaction L-seryl-[protein] + ATP = O-phospho-L-seryl-[protein] + ADP + H(+). The catalysed reaction is L-threonyl-[protein] + ATP = O-phospho-L-threonyl-[protein] + ADP + H(+). The enzyme catalyses L-tyrosyl-[protein] + ATP = O-phospho-L-tyrosyl-[protein] + ADP + H(+). Serine/threonine protein kinase involved in a signal transduction pathway that plays a role in yeast cell morphogenesis and cell growth. This pathway seems to start by SMP3; then involves the kinase PKC1 that may act on the BCK1 kinase that then phosphorylates MKK1 and MKK2 which themselves phosphorylate the MPK1 kinase. The polypeptide is MAP kinase kinase MKK2/SSP33 (MKK2) (Saccharomyces cerevisiae (strain ATCC 204508 / S288c) (Baker's yeast)).